A 350-amino-acid polypeptide reads, in one-letter code: Protein-glutamate methylesterase/protein-glutamine glutaminase (350 aa).

Positions 5–122 (KVLCVDDSAL…RDGLIEYSEV (118 aa)) constitute a Response regulatory domain. The residue at position 56 (aspartate 56) is a 4-aspartylphosphate. The 195-residue stretch at 152 to 346 (PFASSEKLVI…ERILTRLGDR (195 aa)) folds into the CheB-type methylesterase domain. Catalysis depends on residues serine 165, histidine 191, and aspartate 288.

The protein belongs to the CheB family. In terms of processing, phosphorylated by CheA. Phosphorylation of the N-terminal regulatory domain activates the methylesterase activity.

Its subcellular location is the cytoplasm. The enzyme catalyses [protein]-L-glutamate 5-O-methyl ester + H2O = L-glutamyl-[protein] + methanol + H(+). It carries out the reaction L-glutaminyl-[protein] + H2O = L-glutamyl-[protein] + NH4(+). Functionally, involved in chemotaxis. Part of a chemotaxis signal transduction system that modulates chemotaxis in response to various stimuli. Catalyzes the demethylation of specific methylglutamate residues introduced into the chemoreceptors (methyl-accepting chemotaxis proteins or MCP) by CheR. Also mediates the irreversible deamidation of specific glutamine residues to glutamic acid. This Bordetella bronchiseptica (strain ATCC BAA-588 / NCTC 13252 / RB50) (Alcaligenes bronchisepticus) protein is Protein-glutamate methylesterase/protein-glutamine glutaminase.